The chain runs to 466 residues: Ceramide glucosyltransferase 1 (466 aa).

Residues 70–90 traverse the membrane as a helical segment; sequence LALSGCIFVSVLYLVHIIAFF. A short sequence motif (D1) is located at residue D148. Residue D200 is a short sequence motif, D2. Position 294 (D294) is a short sequence motif, D3. D294 functions as the Proton acceptor in the catalytic mechanism. Positions 330–334 match the (Q/R)XXRW motif; sequence RIGRW. The next 2 membrane-spanning stretches (helical) occupy residues 354–374 and 403–423; these read CVTS…YSVY and TPFL…FIFI.

The protein belongs to the glycosyltransferase 2 family. As to expression, expressed in excretory canals, pharyngeal intestinal valve, intestine and intestinal rectal valve.

Its subcellular location is the membrane. The catalysed reaction is an N-acylsphing-4-enine + UDP-alpha-D-glucose = a beta-D-glucosyl-(1&lt;-&gt;1')-N-acylsphing-4-enine + UDP + H(+). The enzyme catalyses an N-acyl-15-methylhexadecasphing-4-enine + UDP-alpha-D-glucose = an N-acyl-1-beta-D-glucosyl-15-methylhexadecasphing-4-enine + UDP + H(+). Its pathway is lipid metabolism; sphingolipid metabolism. Functionally, catalyzes the first glycosylation step in glycosphingolipid biosynthesis, the transfer of glucose to ceramide to produce glucosylceramides (GlcCer). GlcCer are known to contribute to the physical properties and physiological functions of membranes and may regulate signal transduction. Only branched-chain sphingoid bases like 15-methylhexadecasphing-4-enine are used for generating complex sphingolipids in Caenorhabditis elegans. Together with cgt-3, plays a role in the trafficking of proteins such as mig-14 to the cell membrane in intestinal cells. This is Ceramide glucosyltransferase 1 from Caenorhabditis elegans.